A 303-amino-acid polypeptide reads, in one-letter code: Acetyltransferase ataH (303 aa).

A signal peptide spans 1-23 (MPTTAAFLRALYILTTLRGIGTS). 3 helical membrane passes run 42 to 62 (FLLH…MMTF), 194 to 214 (LVFA…GIML), and 257 to 277 (GYIW…FPLF).

It belongs to the wax synthase family.

The protein resides in the membrane. The protein operates within mycotoxin biosynthesis. Its function is as follows. Acetyltransferase; part of the gene cluster that mediates the biosynthesis of acetylaranotin, a member of the epipolythiodioxopiperazine (ETP) class of toxins characterized by a disulfide-bridged cyclic dipeptide. The first step of acetylaranotin biosynthesis is performed by the NRPS ataP which produces diketopiperazine cyclo-L-Phe-L-Phe via the condensation of 2 phenylalanines (L-Phe). The ataC domain of ataTC then catalyzes the formation of bishydroxylation of cyclo-L-Phe-L-Phe. The glutathione S-transferase domain ataG in ataIMG further catalyzes the conjugation of two glutathiones to the bishydroxylated intermediate. Next, the dipeptidase ataJ removes the Glu residues. The following step is performed by the carbon sulfur lyase domain ataI of ataIMG which may convert the bis-cysteinyl adduct to yield an epidithiol intermediate. The ataT domain from ataTC then catalyzes the oxidation of the free dithiols, followed by a cyclization step catalyzed by the cytochrome P450 ataF. AtaF probably acts as an epoxidase to promote a dual epoxidation formation at C8 and C9 along with C8' and C9', followed by the spontaneous nucleophilic attack of the amide nitrogens N10 and N10' to yield an intermediate with the pyrrolidine partial structure. The final steps of acetylaranotin biosynthesis involve the acetylation and ring rearrangement of an epitetrathiodiketopiperazine intermediate to produce acetylaranotin. AtaH probably catalyzes the acetylation of epitetrathiodiketopiperazine to produce a diacetate and ataY is responsible for the formation of the dihydrooxepin moiety that converts the diacetate intermediate to acetylaranotin via acetylapoaranotin. Both enzymes could function independently in the absence of the other. The acetylaranotin bis-thiomethyltransferase ataS located outside of acetylaranotin gene cluster is the main thiomethyltransferase responsible for converting acetylaranotin and its related intermediates to their methylated forms. This Aspergillus terreus (strain NIH 2624 / FGSC A1156) protein is Acetyltransferase ataH.